A 119-amino-acid polypeptide reads, in one-letter code: Nucleoid-associated protein Cphy_0047 (119 aa).

Residues 23 to 45 (AQRMQKQMEDKTKEMEEKQWEAT) are disordered. The segment covering 28-42 (KQMEDKTKEMEEKQW) has biased composition (basic and acidic residues).

The protein belongs to the YbaB/EbfC family. In terms of assembly, homodimer.

Its subcellular location is the cytoplasm. The protein localises to the nucleoid. In terms of biological role, binds to DNA and alters its conformation. May be involved in regulation of gene expression, nucleoid organization and DNA protection. This chain is Nucleoid-associated protein Cphy_0047, found in Lachnoclostridium phytofermentans (strain ATCC 700394 / DSM 18823 / ISDg) (Clostridium phytofermentans).